A 73-amino-acid polypeptide reads, in one-letter code: U3-agatoxin-Ao1k (73 aa).

Residues 1 to 20 (MRTIISLLLLSAMVFAVIEA) form the signal peptide. The propeptide occupies 21–34 (ISLEEGLQLFEGER). 4 disulfide bridges follow: cysteine 36/cysteine 52, cysteine 43/cysteine 57, cysteine 51/cysteine 67, and cysteine 59/cysteine 65. Serine 71 is modified (serine amide).

It belongs to the neurotoxin 07 (Beta/delta-agtx) family. 03 (aga-4) subfamily. Aga sub-subfamily. As to expression, expressed by the venom gland.

The protein localises to the secreted. Its function is as follows. Insecticidal neurotoxin that modulates the insect Nav channel (DmNaV1/tipE (para/tipE)) in a unique manner, with both the activation and inactivation processes being affected. The voltage dependence of activation is shifted toward more hyperpolarized potentials (analogous to site 4 toxins) and a non-inactivating persistent sodium current is induced (site 3-like action). Interestingly, both effects take place in a voltage-dependent manner, producing a bell-shaped curve between -80 and 0 mV. Compared to beta/delta-agatoxin-1 to -3, this toxin appears to affect the insect sodium channel only weakly. This Agelena orientalis (Funnel-web spider) protein is U3-agatoxin-Ao1k.